A 104-amino-acid polypeptide reads, in one-letter code: Large ribosomal subunit protein uL24 (104 aa).

It belongs to the universal ribosomal protein uL24 family. In terms of assembly, part of the 50S ribosomal subunit.

One of two assembly initiator proteins, it binds directly to the 5'-end of the 23S rRNA, where it nucleates assembly of the 50S subunit. Its function is as follows. One of the proteins that surrounds the polypeptide exit tunnel on the outside of the subunit. This chain is Large ribosomal subunit protein uL24, found in Shigella dysenteriae serotype 1 (strain Sd197).